A 125-amino-acid polypeptide reads, in one-letter code: uncharacterized protein (125 aa).

Residues 10–26 (IIILVCLMFLAIMVYIY) form a helical membrane-spanning segment.

It is found in the membrane. This is an uncharacterized protein from Rickettsia prowazekii (strain Madrid E).